Consider the following 512-residue polypeptide: Glutathione-binding protein GsiB (512 aa).

Residues 1–26 (MARAVHRSGLVALGIATALMASCAFA) form the signal peptide.

This sequence belongs to the bacterial solute-binding protein 5 family. As to quaternary structure, the complex is composed of two ATP-binding proteins (GsiA), two transmembrane proteins (GsiC and GsiD) and a solute-binding protein (GsiB).

It localises to the periplasm. Part of the ABC transporter complex GsiABCD involved in glutathione import. Binds glutathione. The sequence is that of Glutathione-binding protein GsiB from Escherichia coli O1:K1 / APEC.